The sequence spans 839 residues: Probable inorganic carbon transporter subunit DabA (839 aa).

Cys353, Asp355, His537, and Cys552 together coordinate Zn(2+).

Belongs to the inorganic carbon transporter (TC 9.A.2) DabA family. Forms a complex with DabB. Zn(2+) serves as cofactor.

It is found in the cell membrane. Part of an energy-coupled inorganic carbon pump. In Chloroflexus aggregans (strain MD-66 / DSM 9485), this protein is Probable inorganic carbon transporter subunit DabA.